The following is a 100-amino-acid chain: NADH-quinone oxidoreductase subunit K (100 aa).

3 consecutive transmembrane segments (helical) span residues 4–24, 28–48, and 60–80; these read LSHG…SLVM, ILFM…ALVV, and IMYI…LALL.

The protein belongs to the complex I subunit 4L family. In terms of assembly, NDH-1 is composed of 13 different subunits. Subunits NuoA, H, J, K, L, M, N constitute the membrane sector of the complex.

Its subcellular location is the cell membrane. The enzyme catalyses a quinone + NADH + 5 H(+)(in) = a quinol + NAD(+) + 4 H(+)(out). NDH-1 shuttles electrons from NADH, via FMN and iron-sulfur (Fe-S) centers, to quinones in the respiratory chain. The immediate electron acceptor for the enzyme in this species is believed to be ubiquinone. Couples the redox reaction to proton translocation (for every two electrons transferred, four hydrogen ions are translocated across the cytoplasmic membrane), and thus conserves the redox energy in a proton gradient. The chain is NADH-quinone oxidoreductase subunit K from Buchnera aphidicola subsp. Baizongia pistaciae (strain Bp).